The primary structure comprises 98 residues: Integration host factor subunit beta (98 aa).

It belongs to the bacterial histone-like protein family. As to quaternary structure, heterodimer of an alpha and a beta chain.

Functionally, this protein is one of the two subunits of integration host factor, a specific DNA-binding protein that functions in genetic recombination as well as in transcriptional and translational control. This chain is Integration host factor subunit beta, found in Pseudomonas fluorescens (strain Pf0-1).